A 677-amino-acid chain; its full sequence is Methionine--tRNA ligase (677 aa).

Positions 15 to 25 (PYANGSIHLGH) match the 'HIGH' region motif. Positions 146, 149, 159, and 162 each coordinate Zn(2+). Positions 333 to 337 (KMSKS) match the 'KMSKS' region motif. Residue Lys-336 participates in ATP binding. A tRNA-binding domain is found at 576 to 677 (DFAKIDLRVA…EGAKPGMRVK (102 aa)).

It belongs to the class-I aminoacyl-tRNA synthetase family. MetG type 1 subfamily. Homodimer. The cofactor is Zn(2+).

The protein resides in the cytoplasm. The enzyme catalyses tRNA(Met) + L-methionine + ATP = L-methionyl-tRNA(Met) + AMP + diphosphate. Is required not only for elongation of protein synthesis but also for the initiation of all mRNA translation through initiator tRNA(fMet) aminoacylation. In Aeromonas hydrophila subsp. hydrophila (strain ATCC 7966 / DSM 30187 / BCRC 13018 / CCUG 14551 / JCM 1027 / KCTC 2358 / NCIMB 9240 / NCTC 8049), this protein is Methionine--tRNA ligase.